A 203-amino-acid polypeptide reads, in one-letter code: ATP-dependent Clp protease proteolytic subunit (203 aa).

Catalysis depends on Ser-103, which acts as the Nucleophile. His-128 is an active-site residue.

This sequence belongs to the peptidase S14 family. As to quaternary structure, fourteen ClpP subunits assemble into 2 heptameric rings which stack back to back to give a disk-like structure with a central cavity, resembling the structure of eukaryotic proteasomes.

The protein localises to the cytoplasm. The enzyme catalyses Hydrolysis of proteins to small peptides in the presence of ATP and magnesium. alpha-casein is the usual test substrate. In the absence of ATP, only oligopeptides shorter than five residues are hydrolyzed (such as succinyl-Leu-Tyr-|-NHMec, and Leu-Tyr-Leu-|-Tyr-Trp, in which cleavage of the -Tyr-|-Leu- and -Tyr-|-Trp bonds also occurs).. Functionally, cleaves peptides in various proteins in a process that requires ATP hydrolysis. Has a chymotrypsin-like activity. Plays a major role in the degradation of misfolded proteins. The protein is ATP-dependent Clp protease proteolytic subunit of Nitrosococcus oceani (strain ATCC 19707 / BCRC 17464 / JCM 30415 / NCIMB 11848 / C-107).